Consider the following 244-residue polypeptide: ATP synthase subunit a (244 aa).

Helical transmembrane passes span 17 to 37 (LTNI…AILT), 75 to 95 (FLAL…LGLP), 112 to 132 (DPAI…YYGV), 164 to 184 (LTLG…LGLL), 196 to 216 (FFLG…WQAF), and 217 to 237 (SLFI…VYMS).

It belongs to the ATPase A chain family. As to quaternary structure, F-type ATPases have 2 components, CF(1) - the catalytic core - and CF(0) - the membrane proton channel. CF(1) has five subunits: alpha(3), beta(3), gamma(1), delta(1), epsilon(1). CF(0) has three main subunits: a(1), b(2) and c(9-12). The alpha and beta chains form an alternating ring which encloses part of the gamma chain. CF(1) is attached to CF(0) by a central stalk formed by the gamma and epsilon chains, while a peripheral stalk is formed by the delta and b chains.

Its subcellular location is the cell membrane. Its function is as follows. Key component of the proton channel; it plays a direct role in the translocation of protons across the membrane. The protein is ATP synthase subunit a of Bacillus velezensis (strain DSM 23117 / BGSC 10A6 / LMG 26770 / FZB42) (Bacillus amyloliquefaciens subsp. plantarum).